Reading from the N-terminus, the 198-residue chain is DNA polymerase zeta subunit 2 (198 aa).

An HORMA domain is found at 4 to 196 (EIKADIIVEA…DLGLKMDVLI (193 aa)).

The protein belongs to the MAD2 family. Accessory subunit of the zeta DNA polymerase complex, which consists of the catalytic component PolZ1/DNApol-zeta and PolZ2/Rev7. Interacts with the apurinic/apyrimidinic (AP) endonuclease Rrp1 (via the N-terminus).

Functionally, as the accessory component of the DNA polymerase zeta complex, involved in translesion DNA synthesis (TLS) and various DNA repair mechanisms. Promotes the apurinic/apyrimidinic (AP) endonuclease activity of Rrp1 and is therefore likely to be involved in the base excision repair (BER) pathway responsible for repair of DNA lesions. It does not appear to influence the synthesis activity of the catalytic component Dmpol-zeta. The sequence is that of DNA polymerase zeta subunit 2 from Drosophila melanogaster (Fruit fly).